Here is a 266-residue protein sequence, read N- to C-terminus: BTB/POZ domain-containing protein KCTD2 (266 aa).

Ala2 bears the N-acetylalanine mark. A disordered region spans residues 38-79; it reads GRHPADTAASPPPPRTAGARARTSGADGRRRGRPLGPAQRGR. Low complexity predominate over residues 53–63; that stretch reads TAGARARTSGA. The 99-residue stretch at 76-174 folds into the BTB domain; that stretch reads QRGRYLLRDT…LVKERIRDNE (99 aa).

In Mus musculus (Mouse), this protein is BTB/POZ domain-containing protein KCTD2 (Kctd2).